The primary structure comprises 60 residues: UPF0434 protein PC1_1771 (60 aa).

Belongs to the UPF0434 family.

The polypeptide is UPF0434 protein PC1_1771 (Pectobacterium carotovorum subsp. carotovorum (strain PC1)).